The chain runs to 105 residues: Small ribosomal subunit protein uS10 (105 aa).

The protein belongs to the universal ribosomal protein uS10 family. As to quaternary structure, part of the 30S ribosomal subunit.

Its function is as follows. Involved in the binding of tRNA to the ribosomes. This chain is Small ribosomal subunit protein uS10, found in Synechocystis sp. (strain ATCC 27184 / PCC 6803 / Kazusa).